The chain runs to 408 residues: Acetylornithine aminotransferase (408 aa).

Pyridoxal 5'-phosphate-binding positions include 107–108 and Phe141; that span reads GT. Position 144 (Arg144) interacts with N(2)-acetyl-L-ornithine. Residue 227–230 participates in pyridoxal 5'-phosphate binding; the sequence is DEIQ. Lys256 bears the N6-(pyridoxal phosphate)lysine mark. Thr284 is a N(2)-acetyl-L-ornithine binding site. Thr285 lines the pyridoxal 5'-phosphate pocket.

It belongs to the class-III pyridoxal-phosphate-dependent aminotransferase family. ArgD subfamily. In terms of assembly, homodimer. The cofactor is pyridoxal 5'-phosphate.

The protein resides in the cytoplasm. It catalyses the reaction N(2)-acetyl-L-ornithine + 2-oxoglutarate = N-acetyl-L-glutamate 5-semialdehyde + L-glutamate. It participates in amino-acid biosynthesis; L-arginine biosynthesis; N(2)-acetyl-L-ornithine from L-glutamate: step 4/4. This is Acetylornithine aminotransferase from Xanthomonas axonopodis pv. citri (strain 306).